The sequence spans 207 residues: Serotonin N-acetyltransferase (207 aa).

A Phosphothreonine; by PKA modification is found at Thr31. Positions 35 to 196 (NEFRCLTPKD…TFTEMHCSLR (162 aa)) constitute an N-acetyltransferase domain. Position 124 (Leu124) interacts with substrate. Residues 124 to 126 (LAV) and 132 to 137 (QQGKGS) each bind acetyl-CoA. Position 159 (Met159) interacts with substrate. Residue 168–170 (YQR) coordinates acetyl-CoA. Ser205 carries the phosphoserine modification.

The protein belongs to the acetyltransferase family. AANAT subfamily. Monomer. Interacts with several 14-3-3 proteins, including YWHAB, YWHAE, YWHAG and YWHAZ, preferentially when phosphorylated at Thr-31. Phosphorylation on Ser-205 also allows binding to YWHAZ, but with lower affinity. The interaction with YWHAZ considerably increases affinity for arylalkylamines and acetyl-CoA and protects the enzyme from dephosphorylation and proteasomal degradation. It may also prevent thiol-dependent inactivation. CAMP-dependent phosphorylation on both N-terminal Thr-31 and C-terminal Ser-205 regulates AANAT activity by promoting interaction with 14-3-3 proteins. In terms of tissue distribution, high levels in pineal gland and retina.

Its subcellular location is the cytoplasm. The enzyme catalyses a 2-arylethylamine + acetyl-CoA = an N-acetyl-2-arylethylamine + CoA + H(+). The protein operates within aromatic compound metabolism; melatonin biosynthesis; melatonin from serotonin: step 1/2. Controls the night/day rhythm of melatonin production in the pineal gland. Catalyzes the N-acetylation of serotonin into N-acetylserotonin, the penultimate step in the synthesis of melatonin. The chain is Serotonin N-acetyltransferase (AANAT) from Bos taurus (Bovine).